The primary structure comprises 193 residues: Holliday junction branch migration complex subunit RuvA (193 aa).

The tract at residues 1–64 is domain I; it reads MIGRIAGTLL…EDAHLLFGFA (64 aa). The segment at 65–144 is domain II; it reads TATERNTFRE…DLGHAPGATP (80 aa). A flexible linker region spans residues 145 to 151; that stretch reads LADSAVD. The tract at residues 151–193 is domain III; that stretch reads DILNALLALGYSEKEAAQAIKQVPAGTGVSDGIKLALKALSKG.

This sequence belongs to the RuvA family. Homotetramer. Forms an RuvA(8)-RuvB(12)-Holliday junction (HJ) complex. HJ DNA is sandwiched between 2 RuvA tetramers; dsDNA enters through RuvA and exits via RuvB. An RuvB hexamer assembles on each DNA strand where it exits the tetramer. Each RuvB hexamer is contacted by two RuvA subunits (via domain III) on 2 adjacent RuvB subunits; this complex drives branch migration. In the full resolvosome a probable DNA-RuvA(4)-RuvB(12)-RuvC(2) complex forms which resolves the HJ.

The protein localises to the cytoplasm. In terms of biological role, the RuvA-RuvB-RuvC complex processes Holliday junction (HJ) DNA during genetic recombination and DNA repair, while the RuvA-RuvB complex plays an important role in the rescue of blocked DNA replication forks via replication fork reversal (RFR). RuvA specifically binds to HJ cruciform DNA, conferring on it an open structure. The RuvB hexamer acts as an ATP-dependent pump, pulling dsDNA into and through the RuvAB complex. HJ branch migration allows RuvC to scan DNA until it finds its consensus sequence, where it cleaves and resolves the cruciform DNA. This chain is Holliday junction branch migration complex subunit RuvA, found in Cupriavidus metallidurans (strain ATCC 43123 / DSM 2839 / NBRC 102507 / CH34) (Ralstonia metallidurans).